The primary structure comprises 253 residues: uncharacterized protein (253 aa).

This is an uncharacterized protein from Campylobacter jejuni subsp. jejuni serotype O:2 (strain ATCC 700819 / NCTC 11168).